The sequence spans 246 residues: Ly6/PLAUR domain-containing protein 4 (246 aa).

The first 26 residues, 1-26 (MGPQHLRLVQLFCLLGAISTLPRAGA), serve as a signal peptide directing secretion. Residue asparagine 117 is glycosylated (N-linked (GlcNAc...) asparagine). The UPAR/Ly6 domain occupies 142–223 (CPTCVGEHMK…LNILEKSQIV (82 aa)). Alanine 225 carries GPI-anchor amidated alanine lipidation. Residues 226-246 (ASSRQDPAWGVVLGLLFAFRD) constitute a propeptide, removed in mature form.

Its subcellular location is the cell membrane. The sequence is that of Ly6/PLAUR domain-containing protein 4 (LYPD4) from Homo sapiens (Human).